A 126-amino-acid chain; its full sequence is MARIAGVDLPRNKRIEIALTYIYGIGLSRSKEILEKTNIDADIKCQDLNDQQVVSIREILESNYQIEGDLKRFESMSIKRLMEISTYRGRRHRLGLPLRGQRTRTNARTRRGGKKTVAGKKKAPRK.

A disordered region spans residues 97 to 126; it reads PLRGQRTRTNARTRRGGKKTVAGKKKAPRK. A compositionally biased stretch (basic residues) spans 101-126; it reads QRTRTNARTRRGGKKTVAGKKKAPRK.

Belongs to the universal ribosomal protein uS13 family. Part of the 30S ribosomal subunit.

It is found in the plastid. Its subcellular location is the chloroplast. Its function is as follows. Located at the top of the head of the 30S subunit, it contacts several helices of the 16S rRNA. This chain is Small ribosomal subunit protein uS13c, found in Pyropia yezoensis (Susabi-nori).